The primary structure comprises 741 residues: NAD(P)H-quinone oxidoreductase subunit 5, chloroplastic (741 aa).

16 helical membrane-spanning segments follow: residues 9-29 (WIIP…LLLF), 40-60 (WTFL…YLSI), 89-109 (IDPL…LVLI), 125-145 (FAYM…SNLI), 147-167 (VYFF…FWFT), 185-205 (GDFG…SFEF), 221-241 (VNLL…IAKS), 258-278 (TPIS…FLVA), 280-300 (LLPL…IGII), 327-347 (LGYM…FHLI), 354-374 (ALLF…VGYS), 396-416 (TAFL…CFWS), 425-445 (LLFS…TAFY), 547-567 (ILFP…IGIP), 602-622 (FLQN…IAYC), and 720-740 (ISSY…ILFY).

This sequence belongs to the complex I subunit 5 family. NDH is composed of at least 16 different subunits, 5 of which are encoded in the nucleus.

It localises to the plastid. Its subcellular location is the chloroplast thylakoid membrane. It catalyses the reaction a plastoquinone + NADH + (n+1) H(+)(in) = a plastoquinol + NAD(+) + n H(+)(out). The enzyme catalyses a plastoquinone + NADPH + (n+1) H(+)(in) = a plastoquinol + NADP(+) + n H(+)(out). Its function is as follows. NDH shuttles electrons from NAD(P)H:plastoquinone, via FMN and iron-sulfur (Fe-S) centers, to quinones in the photosynthetic chain and possibly in a chloroplast respiratory chain. The immediate electron acceptor for the enzyme in this species is believed to be plastoquinone. Couples the redox reaction to proton translocation, and thus conserves the redox energy in a proton gradient. The protein is NAD(P)H-quinone oxidoreductase subunit 5, chloroplastic (ndhF) of Arabis hirsuta (Hairy rock-cress).